The following is a 397-amino-acid chain: MNWHFPFFILTTVTLYSVHSQFNSLSLEELGSNTGIQVFNQIIKSRPHENVVVSPHGIASILGMLQLGADGKTKKQLSTVMRYNVNGVGKVLKKINKAIVSKKNKDIVTVANAVFLRNGFKMEVPFAVRNKDVFQCEVQNVNFQDPASASESINFWVKNETRGMIDNLLSPNLIDGALTRLVLVNAVYFKGLWKSRFQPESTKKRTFVAGDGKSYQVPMLAQLSVFRSGSTRTPNGLWYNFIELPYHGESISMLIALPTESSTPLSAIIPHITTKTIDSWMNTMVPKRMQLVLPKFTAVAQTDLKEPLKALGITEMFEPSKANFTKITRSESLHVSHILQKAKIEVSEDGTKASAATTAILIARSSPPWFIVDRPFLFSIRHNPTGAILFLGQVNKP.

The first 19 residues, 1 to 19 (MNWHFPFFILTTVTLYSVH), serve as a signal peptide directing secretion. N-linked (GlcNAc...) asparagine glycosylation occurs at N159.

The protein belongs to the serpin family. In terms of tissue distribution, most abundant in seminal vesicles.

The protein resides in the secreted. Its subcellular location is the extracellular space. Serine protease inhibitor with activity toward thrombin, trypsin, and urokinase. Promotes neurite extension by inhibiting thrombin. Binds heparin. The protein is Glia-derived nexin (Serpine2) of Mus musculus (Mouse).